The sequence spans 552 residues: MFCYQCSEASKGVGCTTIGVCGKTPDVANLQDLLIWLTRGISYWALKAKEYGVKDDEVNLFVAEALFSTITNVNFSAKRMVEFIERAFELRERIKHRFLEAYAEKEGKTFDEKVPEAAEWHKKGGVDLYELKGMEVGVLFDKDEDIRSLKQLLIYGLKGIAAYTDHAYILKHTNDDILYFIQKGLVETLREDITVDELVSLVLEAGKVAVDAMALLDKANTTEFGNPEITEVYTGTYNTPAILVSGHDLLDLEELLKQTEGTGIMVYTHGEMLPAHAYPKLKKYKHLAGNFGSAWWKQSEEFEEFGGAILMTTNCLVPPKESYKDRVFTTGLVGFDKLTHIPNRTDGKPKDFSPVIKKALELGPIPERKGKKIVIGFAHDQVSRLLDKVIDAVKSGAIKKFVVMGGCDGRHKEREYYTEFAKKLPKDTVILTAGCAKYRYNHLDLGDIGGIPRVLDAGQCNDSYSLVVTALKLKEALGLDDINDLPIVYNIAWYEQKAIAVLLALLYLGVKGIRLGPVLPAFISPNVLKVLVDKFNIAPITTVEEDLKVLLS.

Residues cysteine 3, cysteine 6, cysteine 15, and cysteine 21 each contribute to the [4Fe-4S] cluster site. Positions 247, 271, 315, 407, 435, 460, 495, and 497 each coordinate hybrid [4Fe-2O-2S] cluster. Cysteine persulfide is present on cysteine 407.

This sequence belongs to the HCP family. [4Fe-4S] cluster is required as a cofactor. Hybrid [4Fe-2O-2S] cluster serves as cofactor.

It is found in the cytoplasm. It carries out the reaction A + NH4(+) + H2O = hydroxylamine + AH2 + H(+). Catalyzes the reduction of hydroxylamine to form NH(3) and H(2)O. In Thermosipho melanesiensis (strain DSM 12029 / CIP 104789 / BI429), this protein is Hydroxylamine reductase.